The sequence spans 368 residues: Meiotic driver wtf23 (368 aa).

The interval 1 to 98 (MKNKYYPLRS…SSGTADNSST (98 aa)) is disordered. A compositionally biased stretch (basic and acidic residues) spans 11–29 (SMDELSAKNDNEIDLEKGP). Composition is skewed to polar residues over residues 57–72 (GANN…STTP) and 89–98 (SSGTADNSST). The next 7 membrane-spanning stretches (helical) occupy residues 105-124 (FLSF…YLTY), 139-158 (YFGV…WYFY), 170-192 (IFLA…VISI), 202-221 (MIII…GCVK), 234-256 (STCT…FWTF), 266-283 (VFLL…TMFL), and 328-350 (GIAF…FRGG).

Belongs to the WTF family. As to quaternary structure, homomer. Forms protein aggregates. The two isoforms can interact with each other and with themselves. High sequence similarity is required for their interaction.

It is found in the spore membrane. Its subcellular location is the vacuole membrane. The protein localises to the ascus epiplasm. The protein resides in the cytoplasm. It localises to the endoplasmic reticulum membrane. In terms of biological role, promotes unequal transmission of alleles from the parental zygote to progeny spores by acting as poison/antidote system where the poison and antidote proteins are produced from the same locus; the poison component is trans-acting and targets all spores within an ascus whereas the antidote component is spore-specific, leading to poisoning of all progeny that do not inherit the allele. Its function is as follows. Localizes isoform 2 to the vacuole thereby facilitating its degradation. Functionally, forms toxic aggregates that disrupt spore maturation. The protein is Meiotic driver wtf23 of Schizosaccharomyces pombe (strain 972 / ATCC 24843) (Fission yeast).